The following is a 1024-amino-acid chain: MTMITDSLAVVLQRRDWENPGVTQLNRLAAHPPFASWRNSEEARTDRPSQQLRSLNGEWRFAWFPAPEAVPESWLECDLPDADTVVVPSNWQMHGYDAPIYTNVTYPITVNPPFVPAENPTGCYSLTFNIDESWLQEGQTRIIFDGVNSAFHLWCNGRWVGYGQDSRLPSEFDLSAFLHAGENRLAVMVLRWSDGSYLEDQDMWRMSGIFRDVSLLHKPTTQISDFQVTTRFNDDFSRAVLEAEVQMYGELRDELRVTVSLWQGETQVASGTAPFGGEIIDERGGYADRVTLRLNVENPELWSAEIPNLYRAVVELHTADGTLIEAEACDVGFREVRIENGLLLLNGKPLLIRGVNRHEHHPLHGQVMDEQTMVQDILLMKQNNFNAVRCSHYPNHPLWYTLCDRYGLYVVDEANIETHGMVPMNRLTDDPRWLPAMSERVTRMVQRDRNHPSVIIWSLGNESGHGANHDALYRWIKSVDPSRPVQYEGGGADTTATDIICPMYARVDEDQPFPAVPKWSIKKWLSLPGEMRPLILCEYAHAMGNSLGGFAKYWQAFRQYPRLQGGFVWDWVDQSLIKYDENGNPWSAYGGDFGDTPNDRQFCMNGLVFADRTPHPALTEAKHQQQFFQFRLSGRTIEVTSEYLFRHSDNEFLHWMVALDGKPLASGEVPLDVGPQGKQLIELPELPQPESAGQLWLTVRVVQPNATAWSEAGHISAWQQWRLAENLSVTLPSASHAIPQLTTSGTDFCIELGNKRWQFNRQSGFLSQMWIGDEKQLLTPLRDQFTRAPLDNDIGVSEATRIDPNAWVERWKAAGHYQAEAALLQCTADTLADAVLITTAHAWQHQGKTLFISRKTYRIDGHGEMVINVDVAVASDTPHPARIGLTCQLAQVSERVNWLGLGPQENYPDRLTAACFDRWDLPLSDMYTPYVFPSENGLRCGTRELNYGPHQWRGDFQFNISRYSQQQLMETSHRHLLHAEEGTWLNIDGFHMGIGGDDSWSPSVSAEFQLSAGRYHYQLVWCQK.

Positions 103 and 202 each coordinate substrate. Asp-202 is a binding site for Na(+). Mg(2+) contacts are provided by Glu-417, His-419, and Glu-462. Residues Glu-462 and 538 to 541 contribute to the substrate site; that span reads EYAH. Glu-462 acts as the Proton donor in catalysis. Residue Glu-538 is the Nucleophile of the active site. Residue Asn-598 participates in Mg(2+) binding. Na(+) is bound by residues Phe-602 and Asn-605. 2 residues coordinate substrate: Asn-605 and Trp-1000.

It belongs to the glycosyl hydrolase 2 family. Homotetramer. The cofactor is Mg(2+). Requires Na(+) as cofactor.

It carries out the reaction Hydrolysis of terminal non-reducing beta-D-galactose residues in beta-D-galactosides.. The chain is Beta-galactosidase from Escherichia coli (strain UTI89 / UPEC).